Reading from the N-terminus, the 484-residue chain is UDP-N-acetylmuramoyl-L-alanyl-D-glutamate--L-lysine ligase (484 aa).

S43 serves as a coordination point for UDP-N-acetyl-alpha-D-muramoyl-L-alanyl-D-glutamate. 119–125 provides a ligand contact to ATP; the sequence is GTKGKTT. UDP-N-acetyl-alpha-D-muramoyl-L-alanyl-D-glutamate contacts are provided by residues 161–162, S188, and R196; that span reads TT. Residue K230 is modified to N6-carboxylysine. The L-lysine recognition motif signature appears at 405–408; the sequence is DDPN.

Belongs to the MurCDEF family. MurE subfamily. Post-translationally, carboxylation is probably crucial for Mg(2+) binding and, consequently, for the gamma-phosphate positioning of ATP.

It localises to the cytoplasm. The catalysed reaction is UDP-N-acetyl-alpha-D-muramoyl-L-alanyl-D-glutamate + L-lysine + ATP = UDP-N-acetyl-alpha-D-muramoyl-L-alanyl-gamma-D-glutamyl-L-lysine + ADP + phosphate + H(+). The protein operates within cell wall biogenesis; peptidoglycan biosynthesis. Functionally, catalyzes the addition of L-lysine to the nucleotide precursor UDP-N-acetylmuramoyl-L-alanyl-D-glutamate (UMAG) in the biosynthesis of bacterial cell-wall peptidoglycan. The chain is UDP-N-acetylmuramoyl-L-alanyl-D-glutamate--L-lysine ligase from Streptococcus agalactiae serotype Ia (strain ATCC 27591 / A909 / CDC SS700).